Here is a 95-residue protein sequence, read N- to C-terminus: Glycophorin-C (95 aa).

The Extracellular portion of the chain corresponds to 1-25 (MSSPVRTPPPERLEPNPGMSYAVME). Residues 26 to 46 (IAIIAAVITAVALVLVCLLFL) form a helical; Signal-anchor for type III membrane protein membrane-spanning segment. The Cytoplasmic segment spans residues 47-95 (MLRYLYRHKGTYYTNEAKGTEFAESADAALQSDPALQDAGDTSKKEYFI). Residues Ser-71, Ser-78, and Ser-89 each carry the phosphoserine modification.

The protein belongs to the glycophorin-C family.

It localises to the cell membrane. The chain is Glycophorin-C (Gypc) from Rattus norvegicus (Rat).